The chain runs to 245 residues: 8-amino-3,8-dideoxy-manno-octulosonate cytidylyltransferase (245 aa).

This sequence belongs to the KdsB family.

The protein localises to the cytoplasm. The catalysed reaction is 8-amino-3,8-dideoxy-alpha-D-manno-octulosonate + CTP = CMP-8-amino-3,8-dideoxy-alpha-D-manno-oct-2-ulosonate + diphosphate. It participates in bacterial outer membrane biogenesis; lipopolysaccharide biosynthesis. Functionally, activates KDO8N (a required 8-carbon sugar) for incorporation into bacterial lipopolysaccharide in the Shewanella genus. The sequence is that of 8-amino-3,8-dideoxy-manno-octulosonate cytidylyltransferase from Shewanella piezotolerans (strain WP3 / JCM 13877).